We begin with the raw amino-acid sequence, 158 residues long: SsrA-binding protein (158 aa).

The protein belongs to the SmpB family.

It localises to the cytoplasm. Its function is as follows. Required for rescue of stalled ribosomes mediated by trans-translation. Binds to transfer-messenger RNA (tmRNA), required for stable association of tmRNA with ribosomes. tmRNA and SmpB together mimic tRNA shape, replacing the anticodon stem-loop with SmpB. tmRNA is encoded by the ssrA gene; the 2 termini fold to resemble tRNA(Ala) and it encodes a 'tag peptide', a short internal open reading frame. During trans-translation Ala-aminoacylated tmRNA acts like a tRNA, entering the A-site of stalled ribosomes, displacing the stalled mRNA. The ribosome then switches to translate the ORF on the tmRNA; the nascent peptide is terminated with the 'tag peptide' encoded by the tmRNA and targeted for degradation. The ribosome is freed to recommence translation, which seems to be the essential function of trans-translation. The chain is SsrA-binding protein from Chloroflexus aggregans (strain MD-66 / DSM 9485).